Consider the following 413-residue polypeptide: Serine/threonine-protein phosphatase 2A 55 kDa regulatory subunit B beta isoform (413 aa).

WD repeat units follow at residues 1-31 (EFNH…KNQV), 57-98 (EIEE…KRPE), 141-179 (AHTY…QSFN), and 190-230 (ELTE…LCDR). At serine 245 the chain carries Phosphoserine. WD repeat units follow at residues 249–287 (EIIS…RPIE), 304–345 (ENDC…DVTL), and 380–412 (DFSK…QDKV). Tyrosine 265 carries the phosphotyrosine modification. Residue threonine 268 is modified to Phosphothreonine.

This sequence belongs to the phosphatase 2A regulatory subunit B family. As to quaternary structure, PP2A consists of a common heterodimeric core enzyme, composed of a 36 kDa catalytic subunit (subunit C) and a 65 kDa constant regulatory subunit (PR65 or subunit A), that associates with a variety of regulatory subunits. Proteins that associate with the core dimer include three families of regulatory subunits B (the R2/B/PR55/B55, R3/B''/PR72/PR130/PR59 and R5/B'/B56 families), the 48 kDa variable regulatory subunit, viral proteins, and cell signaling molecules. Interacts with TOMM22. Interacts with IER5 (via N- and C-terminal regions). In terms of tissue distribution, brain.

Its subcellular location is the cytoplasm. The protein resides in the cytoskeleton. It is found in the membrane. The B regulatory subunit might modulate substrate selectivity and catalytic activity, and might also direct the localization of the catalytic enzyme to a particular subcellular compartment. In Oryctolagus cuniculus (Rabbit), this protein is Serine/threonine-protein phosphatase 2A 55 kDa regulatory subunit B beta isoform (PPP2R2B).